The following is a 561-amino-acid chain: Centromere protein T (561 aa).

Residues 1-83 are disordered; sequence MADHNPDSDS…HIQASGHLEE (83 aa). Positions 18–27 are enriched in basic and acidic residues; it reads RVLDTADPRT. The segment covering 34–46 has biased composition (low complexity); sequence ARAGARRALLETA. Residue S47 is modified to Phosphoserine. T85 is subject to Phosphothreonine. Residues 93-421 are flexible stalk domain; that stretch reads ILLTAPESSI…RHHQFLEPAP (329 aa). Disordered stretches follow at residues 256-292 and 333-457; these read HSLP…PGKP and AEKK…DPHK. Over residues 276 to 288 the composition is skewed to polar residues; the sequence is KTQSSGPGLQKNS. S343, S345, and S356 each carry phosphoserine. Positions 357-367 are enriched in basic and acidic residues; the sequence is RVEEAEGHTEV. Phosphoserine occurs at positions 373, 385, 386, and 397. Residues 395-407 show a composition bias toward low complexity; it reads AASPESASSTPES.

Belongs to the CENP-T/CNN1 family. Component of the CENPA-CAD complex, composed of CENPI, CENPK, CENPL, CENPO, CENPP, CENPQ, CENPR and CENPS. The CENPA-CAD complex is probably recruited on centromeres by the CENPA-NAC complex, at least composed of CENPA, CENPC, CENPH, CENPM, CENPN, CENPT and CENPU. Identified in a centromeric complex containing histones H2A, H2B, H3 and H4, and at least CENPA, CENPB, CENPC, CENPT, CENPN, HJURP, SUPT16H, SSRP1 and RSF1. Interacts (via N-terminus) with the NDC80 complex. Heterodimer with CENPW; this dimer coassembles with CENPS-CENPX heterodimers at centromeres to form the tetrameric CENP-T-W-S-X complex. Dynamically phosphorylated at Ser-47 and probably also other sites during the cell cycle. Phosphorylated at Ser-47 during G2 phase, metaphase and anaphase, but not during telophase or G1 phase.

It localises to the nucleus. It is found in the chromosome. Its subcellular location is the centromere. The protein localises to the kinetochore. Component of the CENPA-NAC (nucleosome-associated) complex, a complex that plays a central role in assembly of kinetochore proteins, mitotic progression and chromosome segregation. The CENPA-NAC complex recruits the CENPA-CAD (nucleosome distal) complex and may be involved in incorporation of newly synthesized CENPA into centromeres. Part of a nucleosome-associated complex that binds specifically to histone H3-containing nucleosomes at the centromere, as opposed to nucleosomes containing CENPA. Component of the heterotetrameric CENP-T-W-S-X complex that binds and supercoils DNA, and plays an important role in kinetochore assembly. CENPT has a fundamental role in kinetochore assembly and function. It is one of the inner kinetochore proteins, with most further proteins binding downstream. Required for normal chromosome organization and normal progress through mitosis. The sequence is that of Centromere protein T (CENPT) from Homo sapiens (Human).